A 1448-amino-acid chain; its full sequence is Murinoglobulin-2 (1448 aa).

Residues 1-24 form the signal peptide; it reads MWKNREAQLCLFSVLLAFLPSASL. Disulfide bonds link Cys48–Cys86, Cys245–Cys277, and Cys263–Cys289. Asn55 carries an N-linked (GlcNAc...) asparagine glycan. N-linked (GlcNAc...) asparagine glycans are attached at residues Asn295, Asn315, Asn387, and Asn502. Cystine bridges form between Cys462–Cys556, Cys588–Cys748, and Cys636–Cys681. The bait region stretch occupies residues 678-709; that stretch reads PTYCYDLPKEPPRKDPPRKDPEPKDTVVETIR. Residues Asn751 and Asn846 are each glycosylated (N-linked (GlcNAc...) asparagine). 4 disulfide bridges follow: Cys824/Cys860, Cys898/Cys1295, Cys1056/Cys1101, and Cys1326/Cys1441. Residues 949 to 952 constitute a cross-link (isoglutamyl cysteine thioester (Cys-Gln)); that stretch reads CGEQ. A glycan (N-linked (GlcNAc...) asparagine) is linked at Asn968. N-linked (GlcNAc...) asparagine glycans are attached at residues Asn1114, Asn1285, and Asn1398.

The protein belongs to the protease inhibitor I39 (alpha-2-macroglobulin) family. As to quaternary structure, monomer.

It localises to the secreted. Functionally, a proteinase activates the inhibitor by specific proteolysis in the bait region, which, by an unknown mechanism leads to reaction at the cysteinyl-glutamyl internal thiol ester site and to a conformational change, whereby the proteinase is trapped and/or covalently bound to the inhibitor. While in the tetrameric proteinase inhibitors steric inhibition is sufficiently strong, monomeric forms need a covalent linkage between the activated glutamyl residue of the original thiol ester and a terminal amino group of a lysine or another nucleophilic group on the proteinase, for inhibition to be effective. This is Murinoglobulin-2 from Rattus norvegicus (Rat).